The chain runs to 228 residues: Ribosomal RNA small subunit methyltransferase G (228 aa).

Residues Gly-82, Leu-87, 105-107, 133-134, and Arg-147 each bind S-adenosyl-L-methionine; these read DAT and VE.

Belongs to the methyltransferase superfamily. RNA methyltransferase RsmG family.

The protein resides in the cytoplasm. Specifically methylates the N7 position of a guanine in 16S rRNA. The polypeptide is Ribosomal RNA small subunit methyltransferase G (Pelodictyon phaeoclathratiforme (strain DSM 5477 / BU-1)).